A 334-amino-acid chain; its full sequence is HTH-type transcriptional repressor PurR (334 aa).

The HTH lacI-type domain occupies 2–56 (ATIKDVARLAGVSTTTVSHVINKTRFVAEATQEKVMKAVDELNYAPSAVARSLKC). The H-T-H motif DNA-binding region spans 4 to 23 (IKDVARLAGVSTTTVSHVIN). A DNA-binding region spans residues 48 to 56 (SAVARSLKC). 4 residues coordinate hypoxanthine: Phe-73, Lys-189, Phe-220, and Asp-274.

As to quaternary structure, homodimer.

It participates in purine metabolism; purine nucleotide biosynthesis [regulation]. Is the main repressor of the genes involved in the de novo synthesis of purine nucleotides, regulating purB, purC, purEK, purF, purHD, purL, purMN and guaBA expression. PurR is allosterically activated to bind its cognate DNA by binding the purine corepressors, hypoxanthine or guanine, thereby effecting transcription repression. This is HTH-type transcriptional repressor PurR from Vibrio vulnificus (strain CMCP6).